Here is a 1470-residue protein sequence, read N- to C-terminus: Calmodulin-regulated spectrin-associated protein 2 (1470 aa).

A Calponin-homology (CH) domain is found at 222–335 (WKLVPARYRK…FMAELFWWFE (114 aa)). A disordered region spans residues 374–397 (SSSSSDFTSRYTRPQTHSSVSGGI). The span at 380–390 (FTSRYTRPQTH) shows a compositional bias: polar residues. 2 positions are modified to phosphoserine: S402 and S404. The residue at position 412 (T412) is a Phosphothreonine. Residues S450, S581, S582, S594, and S656 each carry the phosphoserine modification. Disordered stretches follow at residues 580–622 (QSSP…EDSS) and 648–712 (ASNP…EGSE). T661 carries the phosphothreonine modification. Phosphoserine is present on S663. Low complexity predominate over residues 663–682 (STKSQPGSSASSSSGVKMTS). The segment covering 686–696 (QKFRKLNHTDG) has biased composition (basic and acidic residues). Residues 739–776 (LLASEMVHLRMRLEEKRRAIEAQKKKMEAAFTKQRQKM) adopt a coiled-coil conformation. The span at 796 to 835 (REEAAGAEDEKVYTDRAKEKESQKMDGQRSKSLADIKESM) shows a compositional bias: basic and acidic residues. Residues 796-864 (REEAAGAEDE…QWNLTSPSEE (69 aa)) form a disordered region. Residue S845 is modified to Phosphoserine. Positions 870–909 (ELLEYTKSIEKLNSSLHFLQQEMQRLSLQQEMLMQMREQQ) form a coiled coil. An MBD region region spans residues 905–1016 (MREQQSWVIS…IQTRSFVCFG (112 aa)). A phosphoserine mark is found at S914 and S919. 2 disordered regions span residues 930–1059 (RQAG…PLES) and 1078–1099 (NEDQLNQPTDPPPKPVFPPTAP). Residues 935–946 (SSAAAPFSADSP) are compositionally biased toward low complexity. The segment covering 952–971 (SPQSSTRKSASFSVKNQRTP) has biased composition (polar residues). Residues T979, T984, and T986 each carry the phosphothreonine modification. 2 positions are modified to phosphoserine: S990 and S1001. Residues 1001-1011 (SPSQVPIQTRS) show a composition bias toward polar residues. Basic and acidic residues-rich tracts occupy residues 1020–1037 (EPQKEPKPKEEIKKEPSE) and 1044–1056 (SCDHNPGEKEVKP). Residues 1086 to 1098 (TDPPPKPVFPPTA) are compositionally biased toward pro residues. S1129 is modified (phosphoserine). A coiled-coil region spans residues 1147–1219 (KDDQKAENDM…REFIRQEYMR (73 aa)). The span at 1167 to 1233 (RLRREKETQL…KLMEDMDTVI (67 aa)) shows a compositional bias: basic and acidic residues. The interval 1167-1327 (RLRREKETQL…TTSSVASGTE (161 aa)) is disordered. Over residues 1268–1280 (SSLSLASLNTGDT) the composition is skewed to polar residues. Phosphoserine occurs at positions 1294, 1300, and 1302. Polar residues predominate over residues 1315–1327 (NASTTSSVASGTE). The CKK domain occupies 1330-1464 (GPKLYKEPSA…QTKRPVTPKK (135 aa)).

This sequence belongs to the CAMSAP1 family. Interacts with CAMSAP3. Interacts with KATNA1 and KATNB1; leading to regulate the length of CAMSAP2-decorated microtubule stretches. Interacts with a complex formed by AKAP9 and PDE4DIP; this interaction, which is PDE4DIP isoform-specific, recruits CAMSAP2 to the Golgi. Interacts with MAPRE1/EB1. Present in the soma, axon, and dendritic shaft of hippocampal neurons (at protein level).

It is found in the cytoplasm. Its subcellular location is the cytoskeleton. The protein localises to the golgi apparatus. The protein resides in the cilium basal body. Functionally, key microtubule-organizing protein that specifically binds the minus-end of non-centrosomal microtubules and regulates their dynamics and organization. Specifically recognizes growing microtubule minus-ends and autonomously decorates and stabilizes microtubule lattice formed by microtubule minus-end polymerization. Acts on free microtubule minus-ends that are not capped by microtubule-nucleating proteins or other factors and protects microtubule minus-ends from depolymerization. In addition, it also reduces the velocity of microtubule polymerization. Through the microtubule cytoskeleton, also regulates the organization of cellular organelles including the Golgi and the early endosomes. Essential for the tethering, but not for nucleation of non-centrosomal microtubules at the Golgi: together with Golgi-associated proteins AKAP9 and PDE4DIP, required to tether non-centrosomal minus-end microtubules to the Golgi, an important step for polarized cell movement. Also acts as a regulator of neuronal polarity and development: localizes to non-centrosomal microtubule minus-ends in neurons and stabilizes non-centrosomal microtubules, which is required for neuronal polarity, axon specification and dendritic branch formation. Through the microtubule cytoskeleton, regulates the autophagosome transport. This Rattus norvegicus (Rat) protein is Calmodulin-regulated spectrin-associated protein 2.